The sequence spans 701 residues: MKPSLESDEEEELGALQKTLRERANRSIQHLSSMLAGHSSDSETSEPNQQELLSSVQQNPCSPVQQSEAVSQLRSLLQMKTKDANIQSLSPSRRKLAAKRATDDGSSSQPGVHNLVPIINNQSEYIQHLEAEVKFCKEELLEMKQRVRVVIVENEKLHHELKAKTIEDTLKEYTFVDSTLNMEHTAENTLKERLGSVNQAEDHKWRKEMEQLKCLYQAQTETLEAQVVSLKKDLACIQKEYEESKERLRHKEAMAVAAGTGQRVSGLCLKCAQHEAVLAETHTNVHVQSIERLTKERDELMTVLCSLRASQTDAQQREWGAYQQVKQAVEMAEEANLEKTRALVQCEHFHNELTRQRERLERELASEQDKISQAREAARSESKKEREELMQTLSSLSQKVAELQGLLDRGERDRNSLNSQLEEAYKKLTVQETDSSKMCAELRFLLSQAQLKKEEAERDVRDISSKLGRQLELAEQEVQKLGVELSGYRQRLEEAQRAEGRARAEAAGLAEGLSRAQRQLHLTRQEKEASERCCGEDMAALTFQAQRRERELTQTLQQMEAQHEKSVRETDALLSAQNSLIRKLKEECHTLGAKLEELAQSSRAEMEQLSLEREHLQESAEKLRGRCEEMEEQCVQHGRMHQRMKQRLQQLDQHCQASSQQVLQLLSRQKQLMQERQQLTEDLHSLKSQVHAGKRMDRLAV.

The segment covering 1–13 (MKPSLESDEEEEL) has biased composition (acidic residues). 2 disordered regions span residues 1 to 67 (MKPS…VQQS) and 84 to 114 (ANIQSLSPSRRKLAAKRATDDGSSSQPGVHN). A compositionally biased stretch (polar residues) spans 45 to 67 (SEPNQQELLSSVQQNPCSPVQQS). 3 coiled-coil regions span residues 119 to 173 (INNQ…LKEY), 203 to 258 (HKWR…AVAA), and 323 to 695 (QQVK…AGKR). The tract at residues 364–387 (LASEQDKISQAREAARSESKKERE) is disordered.

It localises to the cytoplasm. It is found in the cytoskeleton. The protein resides in the microtubule organizing center. Its subcellular location is the centrosome. The protein localises to the centriole. It localises to the cilium basal body. It is found in the cell junction. Functionally, plays a role in the establishment of cell polarity and epithelial lumen formation. Also plays an essential role in ciliogenesis and subsequent Hedgehog signaling pathway that requires the presence of intact primary cilia for pathway activation. Mechanistically, interacts with and mediates RABEP2 centrosomal localization which is critical for ciliogenesis. In Danio rerio (Zebrafish), this protein is Serologically defined colon cancer antigen 8 homolog (Sdccag8).